The primary structure comprises 252 residues: Geranylgeranylglyceryl phosphate synthase (252 aa).

The Mg(2+) site is built by Asp-27 and Thr-57. Sn-glycerol 1-phosphate-binding positions include 175 to 181 (YLEAGSG), 206 to 207 (GG), and 228 to 229 (GN).

The protein belongs to the GGGP/HepGP synthase family. Group II subfamily. Mg(2+) is required as a cofactor.

The protein resides in the cytoplasm. The catalysed reaction is sn-glycerol 1-phosphate + (2E,6E,10E)-geranylgeranyl diphosphate = sn-3-O-(geranylgeranyl)glycerol 1-phosphate + diphosphate. It participates in membrane lipid metabolism; glycerophospholipid metabolism. Prenyltransferase that catalyzes the transfer of the geranylgeranyl moiety of geranylgeranyl diphosphate (GGPP) to the C3 hydroxyl of sn-glycerol-1-phosphate (G1P). This reaction is the first ether-bond-formation step in the biosynthesis of archaeal membrane lipids. In Metallosphaera sedula (strain ATCC 51363 / DSM 5348 / JCM 9185 / NBRC 15509 / TH2), this protein is Geranylgeranylglyceryl phosphate synthase.